Here is a 42-residue protein sequence, read N- to C-terminus: Tachystatin-B1 (42 aa).

Intrachain disulfides connect C4-C20, C11-C25, and C19-C37.

Granular hemocytes, small secretory granules.

It localises to the secreted. Exhibits stronger antimicrobial activity against the Gram-positive bacteria (S.aureus (IC(50) is 7.4 ug/ml)) and fungi (C.albicans (IC(50) is 3.0 ug/ml) and P.pastoris (IC(50) is 0.1 ug/ml)) than Gram-negative bacteria (E.coli no inhibition at 100 ug/ml). Binds to chitin (4.3 uM are required to obtain 50% of binding). Does not cause hemolysis on sheep erythrocytes. Has no blocking activity on the P-type calcium channel. This Tachypleus tridentatus (Japanese horseshoe crab) protein is Tachystatin-B1.